Here is a 150-residue protein sequence, read N- to C-terminus: Ribosome-binding factor A (150 aa).

Residues 119 to 150 (VAERAKSAQPAGEPDPYRFDGAAAADDDEPAT) form a disordered region.

The protein belongs to the RbfA family. Monomer. Binds 30S ribosomal subunits, but not 50S ribosomal subunits or 70S ribosomes.

It localises to the cytoplasm. In terms of biological role, one of several proteins that assist in the late maturation steps of the functional core of the 30S ribosomal subunit. Associates with free 30S ribosomal subunits (but not with 30S subunits that are part of 70S ribosomes or polysomes). Required for efficient processing of 16S rRNA. May interact with the 5'-terminal helix region of 16S rRNA. This Acidothermus cellulolyticus (strain ATCC 43068 / DSM 8971 / 11B) protein is Ribosome-binding factor A.